We begin with the raw amino-acid sequence, 288 residues long: Eukaryotic translation initiation factor 3 subunit G (288 aa).

A disordered region spans residues 1-33 (MSRVANNRDWADDEDLEDSNELPQSTTTTNKDG). A compositionally biased stretch (acidic residues) spans 11-20 (ADDEDLEDSN). Polar residues predominate over residues 21 to 33 (ELPQSTTTTNKDG). Residues 208-286 (ATLRVTNVSE…LILRVEFAKK (79 aa)) form the RRM domain.

It belongs to the eIF-3 subunit G family. In terms of assembly, component of the eukaryotic translation initiation factor 3 (eIF-3) complex.

Its subcellular location is the cytoplasm. Functionally, RNA-binding component of the eukaryotic translation initiation factor 3 (eIF-3) complex, which is involved in protein synthesis of a specialized repertoire of mRNAs and, together with other initiation factors, stimulates binding of mRNA and methionyl-tRNAi to the 40S ribosome. The eIF-3 complex specifically targets and initiates translation of a subset of mRNAs involved in cell proliferation. This subunit can bind 18S rRNA. The sequence is that of Eukaryotic translation initiation factor 3 subunit G (tif35) from Sclerotinia sclerotiorum (strain ATCC 18683 / 1980 / Ss-1) (White mold).